A 322-amino-acid chain; its full sequence is MFKIGYRTIKTALGTALAIYISQLLHLQNFASAGIITILCIQITQKRSLQASWARFSACCLAIAFSYLFFELIGYHPFVIGALLLIFIPITVLLKINEGIVTSSVIILHLYMSGGITPTFIWNEVQLITVGIGVALLMNLYMPSLDRKLIAYRKKIEDNFAVIFAEIERYLLTGEQDWSGKEIPETHQLITEAKNLAYRDVQNHILRYENLHYHYFKMREKQFEIIERLLPKVTSISITVDQGKMIAEFIHDLREAIHPGNTAYKFLKRLADMRKEFEEMPLPATREEFEARAALFHLLGEMEQYLVIKSYFKGIKAQKSLG.

4 helical membrane passes run 24–44, 68–88, 100–120, and 125–145; these read LLHL…IQIT, LFFE…LIFI, IVTS…TPTF, and VQLI…MPSL.

The protein resides in the cell membrane. This is an uncharacterized protein from Bacillus subtilis (strain 168).